Here is a 439-residue protein sequence, read N- to C-terminus: Xylose isomerase (439 aa).

Residues His101 and Asp104 contribute to the active site. 7 residues coordinate Mg(2+): Glu232, Glu268, His271, Asp296, Asp307, Asp309, and Asp339.

This sequence belongs to the xylose isomerase family. In terms of assembly, homotetramer. It depends on Mg(2+) as a cofactor.

It is found in the cytoplasm. It catalyses the reaction alpha-D-xylose = alpha-D-xylulofuranose. This chain is Xylose isomerase, found in Actinobacillus pleuropneumoniae serotype 5b (strain L20).